We begin with the raw amino-acid sequence, 462 residues long: Fumarate hydratase class II (462 aa).

Substrate-binding positions include Ser-97 to Thr-99, His-127 to Asp-130, Ser-137 to Asn-139, and Thr-185. His-186 functions as the Proton donor/acceptor in the catalytic mechanism. The active site involves Ser-316. Substrate contacts are provided by residues Ser-317 and Lys-322–Asn-324.

It belongs to the class-II fumarase/aspartase family. Fumarase subfamily. Homotetramer.

The protein resides in the cytoplasm. It carries out the reaction (S)-malate = fumarate + H2O. It participates in carbohydrate metabolism; tricarboxylic acid cycle; (S)-malate from fumarate: step 1/1. Functionally, involved in the TCA cycle. Catalyzes the stereospecific interconversion of fumarate to L-malate. This chain is Fumarate hydratase class II, found in Bacillus subtilis (strain 168).